A 603-amino-acid polypeptide reads, in one-letter code: Protein US26 (603 aa).

The segment covering 496 to 513 has biased composition (acidic residues); the sequence is EEEDQEEDDTSDDDDQEK. 2 disordered regions span residues 496 to 536 and 549 to 568; these read EEED…GSLE and AVAE…DTAQ. A compositionally biased stretch (polar residues) spans 517–533; it reads NPQNNIGSLTRTPSSPG.

This sequence belongs to the herpesviridae US22 family.

The sequence is that of Protein US26 (US26) from Human cytomegalovirus (strain Merlin) (HHV-5).